A 215-amino-acid polypeptide reads, in one-letter code: Adenylate kinase (215 aa).

10–15 provides a ligand contact to ATP; the sequence is GAGKGT. Positions 30–59 are NMP; that stretch reads STGDMFRAAMKNETEMGKLAKSFIDKGELV. Residues threonine 31, arginine 36, 57–59, 86–89, and glutamine 93 each bind AMP; these read ELV and GYPR. The LID stretch occupies residues 127–165; that stretch reads GRYICRNCGATYHKIFNPTKVEGTCDVCGSHDLYQRADD. Arginine 128 serves as a coordination point for ATP. Zn(2+) contacts are provided by cysteine 131 and cysteine 134. 137–138 provides a ligand contact to ATP; sequence TY. Residues cysteine 151 and cysteine 154 each contribute to the Zn(2+) site. AMP contacts are provided by arginine 162 and arginine 173. Glutamine 201 serves as a coordination point for ATP.

This sequence belongs to the adenylate kinase family. Monomer.

It localises to the cytoplasm. It carries out the reaction AMP + ATP = 2 ADP. It participates in purine metabolism; AMP biosynthesis via salvage pathway; AMP from ADP: step 1/1. In terms of biological role, catalyzes the reversible transfer of the terminal phosphate group between ATP and AMP. Plays an important role in cellular energy homeostasis and in adenine nucleotide metabolism. The chain is Adenylate kinase from Lactococcus lactis subsp. cremoris (strain SK11).